Reading from the N-terminus, the 227-residue chain is MHIERLDFENSPYLGVFGVATDRVVLIREGLQEKKLEVIRETLKVPVIEVSVMKSRIIGTLATGNSNAIILPWYVWDAEIERIKKALSEYGIDMEVVPFRSKYTALGNLILTNDKAALVSAKFSRKEAQEIGEILGVEVERGVIAGLHAVGSAGVVTNKGGLVHPETSDEELEWLSDLFKVDVYVGTANMGVPYVGTCMLANSNGVVVGHLTTGPEIVKIEEALGFV.

Belongs to the eIF-6 family.

Binds to the 50S ribosomal subunit and prevents its association with the 30S ribosomal subunit to form the 70S initiation complex. This Pyrococcus horikoshii (strain ATCC 700860 / DSM 12428 / JCM 9974 / NBRC 100139 / OT-3) protein is Translation initiation factor 6.